The chain runs to 215 residues: Chymomexicain (215 aa).

Intrachain disulfides connect Cys22-Cys63, Cys56-Cys96, and Cys154-Cys201. Residue Cys25 is part of the active site. Residues His160 and Asn176 contribute to the active site.

Belongs to the peptidase C1 family.

Cysteine protease. The polypeptide is Chymomexicain (Jacaratia mexicana (Wild papaya)).